Consider the following 124-residue polypeptide: Splicing factor 3B subunit 6-like protein (124 aa).

The segment at 16–29 (EVNRVLYVRNLPFN) is interaction with pre-mRNA branch site. Residues 19 to 94 (RVLYVRNLPF…RYLIVLYYQH (76 aa)) form the RRM domain.

The protein resides in the nucleus. Its function is as follows. May be necessary for the splicing of pre-mRNA. The chain is Splicing factor 3B subunit 6-like protein from Arabidopsis thaliana (Mouse-ear cress).